Here is a 363-residue protein sequence, read N- to C-terminus: SWIRM domain-containing protein YOR338W (363 aa).

Disordered stretches follow at residues 1-22 (MLDN…GGIN) and 186-208 (LYED…VPVR). A compositionally biased stretch (basic and acidic residues) spans 186 to 196 (LYEDDGNRSEN). Residues 266 to 363 (LKVEWKGSPM…LQDKHFEKYL (98 aa)) form the SWIRM domain.

This is SWIRM domain-containing protein YOR338W from Saccharomyces cerevisiae (strain ATCC 204508 / S288c) (Baker's yeast).